Here is a 620-residue protein sequence, read N- to C-terminus: Protein phosphatase 2C-like domain-containing protein 1 (620 aa).

The PPM-type phosphatase domain maps to 173–611 (GIAICSNNNS…DSITVMVMFL (439 aa)).

Belongs to the PP2C family.

The polypeptide is Protein phosphatase 2C-like domain-containing protein 1 (Pp2d1) (Mus musculus (Mouse)).